We begin with the raw amino-acid sequence, 1505 residues long: Probable serine/threonine-protein kinase DDB_G0280133 (1505 aa).

PAS domains follow at residues Asn-2 to Gly-72, Arg-108 to Gly-178, and Asp-215 to His-284. 2 disordered regions span residues Asp-282–Ser-348 and Arg-398–Tyr-533. Composition is skewed to low complexity over residues Gln-289–Thr-314 and Ser-328–Thr-344. Basic and acidic residues-rich tracts occupy residues Arg-398 to Asn-407 and Glu-415 to Glu-430. The segment covering His-431–Asp-443 has biased composition (basic residues). A compositionally biased stretch (low complexity) spans Asn-448 to Ser-468. A compositionally biased stretch (basic residues) spans Ser-479–Ser-489. Positions Ser-515–Ser-532 are enriched in low complexity. Residues Tyr-542–Leu-805 enclose the Protein kinase domain. ATP-binding positions include Leu-548 to Val-556 and Lys-571. Asp-684 (proton acceptor) is an active-site residue. Residues Asn-855 to Asn-960 show a composition bias toward low complexity. Disordered stretches follow at residues Asn-855 to Gln-1048, Gln-1072 to Gln-1091, and Gln-1181 to Asn-1358. Residues Asn-903–Asn-939 adopt a coiled-coil conformation. Positions Leu-961–Tyr-974 are enriched in polar residues. 2 stretches are compositionally biased toward low complexity: residues Gln-975 to His-1013 and Gln-1022 to Gln-1048. Positions Gln-1072–Asn-1082 are enriched in polar residues. Residues Ile-1125–Asp-1189 are a coiled coil. Residues Ser-1202–Asn-1271 show a composition bias toward basic and acidic residues. A compositionally biased stretch (low complexity) spans Arg-1272–Asn-1282. Basic and acidic residues-rich tracts occupy residues Asn-1283–Lys-1301 and Asn-1313–Phe-1326. Polar residues predominate over residues Ser-1331–Arg-1347. The region spanning Phe-1399–Ile-1463 is the FHA domain.

Belongs to the protein kinase superfamily. CAMK Ser/Thr protein kinase family. SNF1 subfamily.

The enzyme catalyses L-seryl-[protein] + ATP = O-phospho-L-seryl-[protein] + ADP + H(+). It catalyses the reaction L-threonyl-[protein] + ATP = O-phospho-L-threonyl-[protein] + ADP + H(+). This is Probable serine/threonine-protein kinase DDB_G0280133 from Dictyostelium discoideum (Social amoeba).